Consider the following 288-residue polypeptide: 33 kDa chaperonin (288 aa).

Disulfide bonds link C235–C237 and C268–C271.

This sequence belongs to the HSP33 family. In terms of processing, under oxidizing conditions two disulfide bonds are formed involving the reactive cysteines. Under reducing conditions zinc is bound to the reactive cysteines and the protein is inactive.

The protein localises to the cytoplasm. In terms of biological role, redox regulated molecular chaperone. Protects both thermally unfolding and oxidatively damaged proteins from irreversible aggregation. Plays an important role in the bacterial defense system toward oxidative stress. The polypeptide is 33 kDa chaperonin (Streptococcus suis (strain 98HAH33)).